The chain runs to 447 residues: Ion-translocating oxidoreductase complex subunit C (447 aa).

4Fe-4S ferredoxin-type domains lie at 359–389 and 399–430; these read AEVL…GRIA and RCRE…LIRY. Residues cysteine 369, cysteine 372, cysteine 375, cysteine 379, cysteine 408, cysteine 411, cysteine 414, and cysteine 418 each coordinate [4Fe-4S] cluster.

This sequence belongs to the 4Fe4S bacterial-type ferredoxin family. RnfC subfamily. As to quaternary structure, the Rnf complex is probably composed of eight subunits, including RnfA, RnfB, RnfC, RnfD, RnfE and RnfG. [4Fe-4S] cluster is required as a cofactor.

Its subcellular location is the cell membrane. Functionally, part of a membrane-bound complex that couples electron transfer with translocation of ions across the membrane. Catalyzes Na(+) transport, most probably coupled to electron transfer from reduced ferredoxin to methanophenazine and heterodisulfide reductase. Involved in heterodisulfide reduction during methanogenesis from acetate. This is Ion-translocating oxidoreductase complex subunit C from Methanosarcina acetivorans (strain ATCC 35395 / DSM 2834 / JCM 12185 / C2A).